Here is a 358-residue protein sequence, read N- to C-terminus: Septin-12 (358 aa).

A disordered region spans residues 1 to 25 (MDPLRRSPSPCLSSQPSSPSTPPCE). The span at 6–18 (RSPSPCLSSQPSS) shows a compositional bias: low complexity. Residues 46–317 (MGFEFNIMVV…ENYRVIRLNE (272 aa)) enclose the Septin-type G domain. The segment at 46–319 (MGFEFNIMVV…YRVIRLNESH (274 aa)) is interaction with SEPTIN7. Residues 56-63 (GQSGLGKS) are G1 motif. GTP-binding positions include 56–63 (GQSGLGKS), threonine 89, glycine 115, 195–203 (RADSLTMEE), glycine 251, and arginine 266. A G3 motif region spans residues 112–115 (DTPG). The G4 motif stretch occupies residues 194-197 (ARAD). Residues 258–358 (VNGRCVLGRK…GAHDDSDDEF (101 aa)) form a self-association (via N-terminus) to polymerize octameric septin 12-7-6-2/4-2/4-6-7-12 filaments region.

Belongs to the TRAFAC class TrmE-Era-EngA-EngB-Septin-like GTPase superfamily. Septin GTPase family. In terms of assembly, septins polymerize into heterooligomeric protein complexes that form filaments, and can associate with cellular membranes, actin filaments and microtubules. GTPase activity is required for filament formation. Interacts with SEPTIN6 and SEPTIN11. Self-associates. Component of a septin core octameric complex consisting of SEPTIN12, SEPTIN7, SEPTIN6 and SEPTIN2 or SEPTIN4 in the order 12-7-6-2-2-6-7-12 or 12-7-6-4-4-6-7-12 and located in the sperm annulus; the octamer polymerizes into filaments via the SEPTIN12 N- and C-termini; the SEPTIN12:SEPTIN7 association is mediated by the respective GTP-binding domains. Interacts with SPAG4 and LMNB1. Associates with alpha- and beta-tubulins. As to expression, widely expressed. Expressed in lymph node.

It localises to the cytoplasm. The protein localises to the cytoskeleton. It is found in the spindle. The protein resides in the nucleus. Its subcellular location is the cell projection. It localises to the cilium. The protein localises to the flagellum. Functionally, filament-forming cytoskeletal GTPase. Involved in spermatogenesis. Involved in the morphogenesis of sperm heads and the elongation of sperm tails probably implicating the association with alpha- and beta-tubulins. Forms a filamentous structure with SEPTIN7, SEPTIN6, SEPTIN2 and probably SEPTIN4 at the sperm annulus which is required for the structural integrity and motility of the sperm tail during postmeiotic differentiation. May play a role in cytokinesis (Potential). The chain is Septin-12 from Homo sapiens (Human).